We begin with the raw amino-acid sequence, 453 residues long: Ribulose bisphosphate carboxylase large chain (453 aa).

The propeptide occupies 1-2; the sequence is MS. N-acetylproline is present on P3. N6,N6,N6-trimethyllysine is present on K14. Substrate is bound by residues N123 and T173. K175 serves as the catalytic Proton acceptor. K177 provides a ligand contact to substrate. K201, D203, and E204 together coordinate Mg(2+). K201 is modified (N6-carboxylysine). H294 acts as the Proton acceptor in catalysis. Substrate is bound by residues R295, H327, and S379.

This sequence belongs to the RuBisCO large chain family. Type I subfamily. In terms of assembly, heterohexadecamer of 8 large chains and 8 small chains; disulfide-linked. The disulfide link is formed within the large subunit homodimers. Mg(2+) is required as a cofactor. Post-translationally, the disulfide bond which can form in the large chain dimeric partners within the hexadecamer appears to be associated with oxidative stress and protein turnover.

It localises to the plastid. Its subcellular location is the chloroplast. It catalyses the reaction 2 (2R)-3-phosphoglycerate + 2 H(+) = D-ribulose 1,5-bisphosphate + CO2 + H2O. The enzyme catalyses D-ribulose 1,5-bisphosphate + O2 = 2-phosphoglycolate + (2R)-3-phosphoglycerate + 2 H(+). Functionally, ruBisCO catalyzes two reactions: the carboxylation of D-ribulose 1,5-bisphosphate, the primary event in carbon dioxide fixation, as well as the oxidative fragmentation of the pentose substrate in the photorespiration process. Both reactions occur simultaneously and in competition at the same active site. The protein is Ribulose bisphosphate carboxylase large chain of Galium palustre (Common marsh bedstraw).